Reading from the N-terminus, the 1138-residue chain is Solute carrier family 12 member 5 (1138 aa).

Disordered stretches follow at residues 1 to 62 (MSRR…KGRE) and 96 to 116 (QGSR…KPVQ). The Cytoplasmic segment spans residues 1 to 98 (MSRRFTVTSL…ANYTNLPQGS (98 aa)). A compositionally biased stretch (basic and acidic residues) spans 21 to 45 (PESRRHSVADPRRLPREDVKGDGNP). Positions 46 to 55 (KESSPFINST) are enriched in polar residues. Thr-57 bears the Phosphothreonine mark. The segment covering 98–111 (SREHEEAENNEGGK) has biased composition (basic and acidic residues). A discontinuously helical membrane pass occupies residues 99-120 (REHEEAENNEGGKKKPVQAPRM). K(+) is bound at residue Lys-113. Over 121 to 129 (GTFMGVYLP) the chain is Extracellular. The chain crosses the membrane as a helical span at residues 130–151 (CLQNIFGVILFLRLTWVVGIAG). Over 152–174 (IMESFCMVFICCSCTMLTAISMS) the chain is Cytoplasmic. A helical membrane pass occupies residues 175 to 203 (AIATNGVVPAGGSYYMISRSLGPEFGGAV). A chloride-binding site is contributed by Ala-184. The Extracellular segment spans residues 204–229 (GLCFYLGTTFAGAMYILGTIEILLAY). The next 2 helical transmembrane spans lie at 230-250 (LFPA…AAML) and 251-276 (NNMR…KYVN). The Extracellular segment spans residues 277 to 402 (KFALVFLGCV…ERRGMPSVGL (126 aa)). Cys-310 and Cys-325 form a disulfide bridge. Residues Asn-314, Asn-333, Asn-351, and Asn-362 are each glycosylated (N-linked (GlcNAc...) asparagine). A disulfide bridge links Cys-345 with Cys-354. The chain crosses the membrane as a helical span at residues 403 to 420 (ADGTPVDMDHPYVFSDMT). Met-410 lines the K(+) pocket. Chloride contacts are provided by Tyr-414 and Val-415. Residues 421-429 (SYFTLLVGI) lie on the Cytoplasmic side of the membrane. A helical membrane pass occupies residues 430 to 453 (YFPSVTGIMAGSNRSGDLRDAQKS). Asp-446 is a K(+) binding site. The Extracellular segment spans residues 454–485 (IPTGTILAIATTSAVYISSVVLFGACIEGVVL). The helical transmembrane segment at 486-513 (RDKFGEAVNGNLVVGTLAWPSPWVIVIG) threads the bilayer. Topologically, residues 514–534 (SFFSTCGAGLQSLTGAPRLLQ) are cytoplasmic. 2 helical membrane passes run 535 to 555 (AISR…KANG) and 556 to 578 (EPTW…ASLD). Residue Glu-569 participates in chloride binding. At 579-592 (EVAPILSMFFLMCY) the chain is on the cytoplasmic side. 2 helical membrane passes run 593 to 615 (MFVN…PRFR) and 616 to 632 (YYHW…CLAL). At 633–1138 (MFICSWYYAL…GGREVITIYS (506 aa)) the chain is on the cytoplasmic side. Residues 667 to 681 (GIRGLSLSAARYALL) are scissor helix. Thr-929 is subject to Phosphothreonine; by OXSR1 and STK39. The segment at 943–1051 (HLTKNERERE…GPSPVSSEGI (109 aa)) is disordered. Positions 945–962 (TKNEREREIQSITDESRG) are enriched in basic and acidic residues. Acidic residues predominate over residues 982-994 (TACDNEEKPEEEV). Positions 1001 to 1012 (SAPSCPSSSPSP) are enriched in low complexity. A compositionally biased stretch (basic and acidic residues) spans 1019 to 1041 (ERETDPEVHLTWTKDKSVAEKNK). Thr-1029 is modified (phosphothreonine; by OXSR1 and STK39). Phosphoserine is present on residues Ser-1044, Ser-1047, and Ser-1048.

Belongs to the SLC12A transporter family. K/Cl co-transporter subfamily. As to quaternary structure, homodimer; adopts a domain-swap conformation at the scissor helices connecting the transmembrane domain and C-terminal domain. Heterodimer with K-Cl cotransporters SLC12A6 and SLC12A7. Interacts with AP2A1. In terms of processing, phosphorylated at Thr-929 and Thr-1029 by OXSR1/OSR1 and STK39/SPAK downstream of WNK kinases (WNK1, WNK2, WNK3 or WNK4), inhibiting the potassium-chloride cotransport activity. Expressed in brainstem, spinal cord and olfactory bulb of 17 dpc embryos. Expressed in all parts of the brain and spinal cord in postnatal day 14 mice. As to expression, expressed in brainstem and spinal cord of 17 dpc embryos. Expressed in all parts of the brain and spinal cord in postnatal day 14 mice.

It localises to the cell membrane. The protein resides in the cell projection. Its subcellular location is the dendrite. It carries out the reaction K(+)(in) + chloride(in) = K(+)(out) + chloride(out). Inhibited following phosphorylation by OXSR1/OSR1 and STK39/SPAK: phosphorylation takes place downstream of WNK kinases (WNK1, WNK2, WNK3 or WNK4) in response to hyperosmotic stress and subsequent cell shrinkage. In terms of biological role, mediates electroneutral potassium-chloride cotransport in mature neurons and is required for neuronal Cl(-) homeostasis. As major extruder of intracellular chloride, it establishes the low neuronal Cl(-) levels required for chloride influx after binding of GABA-A and glycine to their receptors, with subsequent hyperpolarization and neuronal inhibition. Involved in the regulation of dendritic spine formation and maturation. In Mus musculus (Mouse), this protein is Solute carrier family 12 member 5 (Slc12a5).